A 221-amino-acid polypeptide reads, in one-letter code: Lipoprotein-releasing system ATP-binding protein LolD (221 aa).

The 213-residue stretch at 8–220 (LKMISKHYKQ…YNLKHGLLNI (213 aa)) folds into the ABC transporter domain. 42–49 (GSSGSGKS) serves as a coordination point for ATP.

This sequence belongs to the ABC transporter superfamily. Lipoprotein translocase (TC 3.A.1.125) family. In terms of assembly, the complex is composed of two ATP-binding proteins (LolD) and two transmembrane proteins (LolC and LolE).

The protein resides in the cell inner membrane. In terms of biological role, part of the ABC transporter complex LolCDE involved in the translocation of mature outer membrane-directed lipoproteins, from the inner membrane to the periplasmic chaperone, LolA. Responsible for the formation of the LolA-lipoprotein complex in an ATP-dependent manner. The chain is Lipoprotein-releasing system ATP-binding protein LolD from Rickettsia prowazekii (strain Madrid E).